We begin with the raw amino-acid sequence, 815 residues long: Serotype-specific mannosyltransferase WbdA (815 aa).

Residues 1-374 are alpha-(1-&gt;2)-mannosyltransferase; the sequence is MSRAIIENAG…WANTAHLAID (374 aa). The segment at 431–804 is alpha-(1-&gt;3)-mannosyltransferase; it reads KLLVDISVLA…WKQSAELLLK (374 aa).

It belongs to the glycosyltransferase group 1 family. Glycosyltransferase 4 subfamily.

It localises to the cell inner membrane. It functions in the pathway bacterial outer membrane biogenesis; LPS O-antigen biosynthesis. Its function is as follows. Mannosyltransferase involved in the biosynthesis of the repeat unit of the lipopolysaccharide (LPS) O-antigen region. The protein is Serotype-specific mannosyltransferase WbdA of Escherichia coli.